A 460-amino-acid chain; its full sequence is Diguanylate cyclase DosC (460 aa).

Residue His98 participates in heme binding. In terms of domain architecture, GGDEF spans 325–458 (TPLSVLIIDV…GRNRVELWKA (134 aa)). Asp333 lines the Mg(2+) pocket. Residues Asn341 and Asp350 each coordinate substrate. Asp376 contacts Mg(2+). Asp376 serves as the catalytic Proton acceptor.

Requires heme as cofactor. It depends on Mg(2+) as a cofactor.

The enzyme catalyses 2 GTP = 3',3'-c-di-GMP + 2 diphosphate. The protein operates within purine metabolism; 3',5'-cyclic di-GMP biosynthesis. Its function is as follows. Globin-coupled heme-based oxygen sensor protein displaying diguanylate cyclase (DGC) activity in response to oxygen availability. Thus, catalyzes the synthesis of cyclic diguanylate (c-di-GMP) via the condensation of 2 GTP molecules. Cyclic-di-GMP is a second messenger which controls cell surface-associated traits in bacteria. This is Diguanylate cyclase DosC (dosC) from Shigella boydii serotype 4 (strain Sb227).